The following is a 347-amino-acid chain: Druantia protein DruD (347 aa).

It localises to the cytoplasm. Component of antiviral defense system Druantia type I, composed of DruA, DruB, DruC, DruD and DruE. Expression of Druantia in E.coli (strain MG1655) confers resistance to phage lambda, SECphi18, SECphi27 and T4. The polypeptide is Druantia protein DruD (Escherichia coli (strain UMEA 4076-1)).